Here is a 313-residue protein sequence, read N- to C-terminus: 4-diphosphocytidyl-2-C-methyl-D-erythritol kinase (313 aa).

The active site involves Lys29. 113–123 serves as a coordination point for ATP; it reads PMGGGVGGGSS. Asp155 is a catalytic residue.

The protein belongs to the GHMP kinase family. IspE subfamily.

It catalyses the reaction 4-CDP-2-C-methyl-D-erythritol + ATP = 4-CDP-2-C-methyl-D-erythritol 2-phosphate + ADP + H(+). Its pathway is isoprenoid biosynthesis; isopentenyl diphosphate biosynthesis via DXP pathway; isopentenyl diphosphate from 1-deoxy-D-xylulose 5-phosphate: step 3/6. Functionally, catalyzes the phosphorylation of the position 2 hydroxy group of 4-diphosphocytidyl-2C-methyl-D-erythritol. In Haemophilus influenzae (strain 86-028NP), this protein is 4-diphosphocytidyl-2-C-methyl-D-erythritol kinase.